The primary structure comprises 469 residues: Transcription factor SOX-10 (469 aa).

Disordered regions lie at residues 1 to 70 (MAEE…DDDK), 163 to 203 (LRMQ…QGGA), 215 to 278 (LDHR…DFGN), 357 to 378 (AQVK…QPST), and 436 to 469 (RPLY…LSRP). Low complexity predominate over residues 23 to 32 (LSPGSAPSLG). Ser24 is modified (phosphoserine). The span at 33–44 (PDGGGGGGGGSG) shows a compositional bias: gly residues. A dimerization (DIM) region spans residues 65-105 (EADDDKFPVCIREAVSQVLSGYDWTLVPMPVRVNGASKSKP). A DNA-binding region (HMG box) is located at residues 107 to 175 (VKRPMNAFMV…QHKKDHPDYK (69 aa)). 2 stretches are compositionally biased toward basic and acidic residues: residues 163-176 (LRMQ…DYKY) and 257-274 (ADPK…KPHI). The interval 231–313 (PEHPSGQSHG…LPPNGHPGHV (83 aa)) is transactivation domain (TAM). Positions 356–469 (KAQVKTETAG…QPVYTTLSRP (114 aa)) are transactivation domain (TAC). The span at 443-469 (SDPSPSGPQSHSPTHWEQPVYTTLSRP) shows a compositional bias: polar residues.

In terms of assembly, monomer. Interacts with ARMCX3 at the mitochondrial outer membrane surface. Interacts with PAX3.

The protein localises to the cytoplasm. It is found in the nucleus. It localises to the mitochondrion outer membrane. Transcription factor that plays a central role in developing and mature glia. Specifically activates expression of myelin genes, during oligodendrocyte (OL) maturation, such as DUSP15 and MYRF, thereby playing a central role in oligodendrocyte maturation and CNS myelination. Once induced, MYRF cooperates with SOX10 to implement the myelination program. Transcriptional activator of MITF, acting synergistically with PAX3. Transcriptional activator of MBP, via binding to the gene promoter. This Sus scrofa (Pig) protein is Transcription factor SOX-10 (SOX10).